We begin with the raw amino-acid sequence, 183 residues long: ATP synthase subunit b, chloroplastic (183 aa).

A helical membrane pass occupies residues 27-49 (LATNLINLTVVVGVLIYFGKGVL).

It belongs to the ATPase B chain family. F-type ATPases have 2 components, F(1) - the catalytic core - and F(0) - the membrane proton channel. F(1) has five subunits: alpha(3), beta(3), gamma(1), delta(1), epsilon(1). F(0) has four main subunits: a(1), b(1), b'(1) and c(10-14). The alpha and beta chains form an alternating ring which encloses part of the gamma chain. F(1) is attached to F(0) by a central stalk formed by the gamma and epsilon chains, while a peripheral stalk is formed by the delta, b and b' chains.

The protein localises to the plastid. It localises to the chloroplast thylakoid membrane. In terms of biological role, f(1)F(0) ATP synthase produces ATP from ADP in the presence of a proton or sodium gradient. F-type ATPases consist of two structural domains, F(1) containing the extramembraneous catalytic core and F(0) containing the membrane proton channel, linked together by a central stalk and a peripheral stalk. During catalysis, ATP synthesis in the catalytic domain of F(1) is coupled via a rotary mechanism of the central stalk subunits to proton translocation. Its function is as follows. Component of the F(0) channel, it forms part of the peripheral stalk, linking F(1) to F(0). The sequence is that of ATP synthase subunit b, chloroplastic from Oryza nivara (Indian wild rice).